The chain runs to 488 residues: Facilitated trehalose transporter Tret1-2 homolog (488 aa).

The Cytoplasmic segment spans residues methionine 1–glutamine 28. Residues valine 29–threonine 49 traverse the membrane as a helical segment. Over serine 50–serine 72 the chain is Extracellular. Residues tryptophan 73–isoleucine 93 traverse the membrane as a helical segment. At glutamate 94–threonine 105 the chain is on the cytoplasmic side. The chain crosses the membrane as a helical span at residues alanine 106–leucine 126. The Extracellular portion of the chain corresponds to cysteine 127–arginine 129. A helical membrane pass occupies residues phenylalanine 130–threonine 150. At leucine 151–glycine 160 the chain is on the cytoplasmic side. Residues leucine 161–methionine 181 form a helical membrane-spanning segment. Asparagine 182 is a glycosylation site (N-linked (GlcNAc...) asparagine). Residues asparagine 182–serine 184 are Extracellular-facing. A helical transmembrane segment spans residues methionine 185–proline 205. The Cytoplasmic portion of the chain corresponds to glutamate 206–proline 268. Residues leucine 269–phenylalanine 289 form a helical membrane-spanning segment. The Extracellular segment spans residues tyrosine 290–asparagine 305. The chain crosses the membrane as a helical span at residues leucine 306–isoleucine 326. The Cytoplasmic segment spans residues aspartate 327–lysine 332. A helical transmembrane segment spans residues isoleucine 333–phenylalanine 353. The Extracellular portion of the chain corresponds to tyrosine 354–cysteine 372. A helical membrane pass occupies residues phenylalanine 373–glycine 393. At glutamate 394 to glycine 402 the chain is on the cytoplasmic side. The helical transmembrane segment at proline 403–phenylalanine 423 threads the bilayer. The Extracellular portion of the chain corresponds to glutamine 424 to histidine 433. Residues glycine 434–valine 454 form a helical membrane-spanning segment. The Cytoplasmic portion of the chain corresponds to proline 455 to methionine 488.

This sequence belongs to the major facilitator superfamily. Sugar transporter (TC 2.A.1.1) family. Trehalose transporter subfamily.

The protein resides in the cell membrane. Fails to transport trehalose. The sequence is that of Facilitated trehalose transporter Tret1-2 homolog from Drosophila simulans (Fruit fly).